The chain runs to 382 residues: D-galactonate dehydratase (382 aa).

A Mg(2+)-binding site is contributed by Asp183. His185 functions as the Proton donor in the catalytic mechanism. Mg(2+) contacts are provided by Glu209 and Glu235. The Proton acceptor role is filled by His285.

It belongs to the mandelate racemase/muconate lactonizing enzyme family. GalD subfamily. It depends on Mg(2+) as a cofactor.

It catalyses the reaction D-galactonate = 2-dehydro-3-deoxy-D-galactonate + H2O. It functions in the pathway carbohydrate acid metabolism; D-galactonate degradation; D-glyceraldehyde 3-phosphate and pyruvate from D-galactonate: step 1/3. In terms of biological role, catalyzes the dehydration of D-galactonate to 2-keto-3-deoxy-D-galactonate. The sequence is that of D-galactonate dehydratase from Klebsiella pneumoniae (strain 342).